The chain runs to 153 residues: Endoribonuclease YbeY (153 aa).

Zn(2+) contacts are provided by H112, H116, and H122.

Belongs to the endoribonuclease YbeY family. Requires Zn(2+) as cofactor.

It is found in the cytoplasm. In terms of biological role, single strand-specific metallo-endoribonuclease involved in late-stage 70S ribosome quality control and in maturation of the 3' terminus of the 16S rRNA. The sequence is that of Endoribonuclease YbeY from Persephonella marina (strain DSM 14350 / EX-H1).